The primary structure comprises 429 residues: Bifunctional protein GlmU (429 aa).

The pyrophosphorylase stretch occupies residues 1-223 (MKTSILILAA…EDEFMGINDK (223 aa)). UDP-N-acetyl-alpha-D-glucosamine-binding positions include 8–11 (LAAG), Lys-22, and 81–82 (GT). Mg(2+) is bound at residue Asp-102. Residues Gly-135, Glu-149, Asn-164, and Asn-221 each coordinate UDP-N-acetyl-alpha-D-glucosamine. Asn-221 is a binding site for Mg(2+). Residues 224–244 (FELSIAENFMQEKIKKYWMQQ) form a linker region. The segment at 245–429 (GVIFHLPQST…KDYYYKKFQK (185 aa)) is N-acetyltransferase. Positions 308 and 325 each coordinate UDP-N-acetyl-alpha-D-glucosamine. The active-site Proton acceptor is the His-336. UDP-N-acetyl-alpha-D-glucosamine-binding residues include Tyr-339 and Asn-350. Residues 359–360 (NY), Ser-378, Ala-396, and Arg-413 each bind acetyl-CoA.

In the N-terminal section; belongs to the N-acetylglucosamine-1-phosphate uridyltransferase family. It in the C-terminal section; belongs to the transferase hexapeptide repeat family. Homotrimer. It depends on Mg(2+) as a cofactor.

The protein localises to the cytoplasm. It catalyses the reaction alpha-D-glucosamine 1-phosphate + acetyl-CoA = N-acetyl-alpha-D-glucosamine 1-phosphate + CoA + H(+). The catalysed reaction is N-acetyl-alpha-D-glucosamine 1-phosphate + UTP + H(+) = UDP-N-acetyl-alpha-D-glucosamine + diphosphate. It participates in nucleotide-sugar biosynthesis; UDP-N-acetyl-alpha-D-glucosamine biosynthesis; N-acetyl-alpha-D-glucosamine 1-phosphate from alpha-D-glucosamine 6-phosphate (route II): step 2/2. It functions in the pathway nucleotide-sugar biosynthesis; UDP-N-acetyl-alpha-D-glucosamine biosynthesis; UDP-N-acetyl-alpha-D-glucosamine from N-acetyl-alpha-D-glucosamine 1-phosphate: step 1/1. The protein operates within bacterial outer membrane biogenesis; LPS lipid A biosynthesis. Functionally, catalyzes the last two sequential reactions in the de novo biosynthetic pathway for UDP-N-acetylglucosamine (UDP-GlcNAc). The C-terminal domain catalyzes the transfer of acetyl group from acetyl coenzyme A to glucosamine-1-phosphate (GlcN-1-P) to produce N-acetylglucosamine-1-phosphate (GlcNAc-1-P), which is converted into UDP-GlcNAc by the transfer of uridine 5-monophosphate (from uridine 5-triphosphate), a reaction catalyzed by the N-terminal domain. The polypeptide is Bifunctional protein GlmU (Campylobacter jejuni subsp. jejuni serotype O:6 (strain 81116 / NCTC 11828)).